Here is a 203-residue protein sequence, read N- to C-terminus: Holliday junction branch migration complex subunit RuvA (203 aa).

The domain I stretch occupies residues 1–65; the sequence is MIAYIHGKLL…EDAFDLYGFP (65 aa). The domain II stretch occupies residues 66-144; sequence CFDDREVFRT…TLKSATVRSG (79 aa). The interval 145-155 is flexible linker; sequence ACPVEGDRSEF. Residues 155–203 form a domain III region; sequence FLDALSGLRNLGYGDDEVRDFLKDIFDEEPDLDAGGAIRVALKKISQNK.

Belongs to the RuvA family. In terms of assembly, homotetramer. Forms an RuvA(8)-RuvB(12)-Holliday junction (HJ) complex. HJ DNA is sandwiched between 2 RuvA tetramers; dsDNA enters through RuvA and exits via RuvB. An RuvB hexamer assembles on each DNA strand where it exits the tetramer. Each RuvB hexamer is contacted by two RuvA subunits (via domain III) on 2 adjacent RuvB subunits; this complex drives branch migration. In the full resolvosome a probable DNA-RuvA(4)-RuvB(12)-RuvC(2) complex forms which resolves the HJ.

Its subcellular location is the cytoplasm. Functionally, the RuvA-RuvB-RuvC complex processes Holliday junction (HJ) DNA during genetic recombination and DNA repair, while the RuvA-RuvB complex plays an important role in the rescue of blocked DNA replication forks via replication fork reversal (RFR). RuvA specifically binds to HJ cruciform DNA, conferring on it an open structure. The RuvB hexamer acts as an ATP-dependent pump, pulling dsDNA into and through the RuvAB complex. HJ branch migration allows RuvC to scan DNA until it finds its consensus sequence, where it cleaves and resolves the cruciform DNA. In Maridesulfovibrio salexigens (strain ATCC 14822 / DSM 2638 / NCIMB 8403 / VKM B-1763) (Desulfovibrio salexigens), this protein is Holliday junction branch migration complex subunit RuvA.